The chain runs to 485 residues: Solute carrier family 35 member F4 (485 aa).

Composition is skewed to polar residues over residues 32-42 (SQKSTTRSSVT) and 50-64 (CPSS…LSPL). Disordered regions lie at residues 32-64 (SQKS…LSPL) and 78-111 (QSRG…SSQE). Basic and acidic residues predominate over residues 88-98 (RRVERQSRSGD). Residues 99–111 (DGTQTRPESSSQE) are compositionally biased toward polar residues. 10 helical membrane passes run 129-149 (IWGL…TQIV), 156-176 (FYCP…FFPV), 217-234 (APFS…LLAL), 241-261 (DVSA…WIVL), 265-285 (FMGV…MMAY), 294-314 (IIGV…KVLF), 329-349 (FVST…IILY), 359-381 (FAAL…NILV), 383-405 (VGVV…PGNA), and 414-434 (VIFN…FLLM). An EamA domain is found at 225–285 (LTNYLYLLAL…AITGIVMMAY (61 aa)).

This sequence belongs to the SLC35F solute transporter family.

The protein localises to the membrane. Putative solute transporter. In Mus musculus (Mouse), this protein is Solute carrier family 35 member F4 (Slc35f4).